The primary structure comprises 151 residues: Large ribosomal subunit protein uL15 (151 aa).

The segment at 1–51 (MKSLRLEDAVPQSGSRHRKLRVGRGHSAGQGKTSGRGMRGQKCRSGGGVRP) is disordered. Residues 15–24 (SRHRKLRVGR) show a composition bias toward basic residues. Gly residues predominate over residues 26–38 (HSAGQGKTSGRGM).

Belongs to the universal ribosomal protein uL15 family. As to quaternary structure, part of the 50S ribosomal subunit.

Its function is as follows. Binds to the 23S rRNA. The polypeptide is Large ribosomal subunit protein uL15 (Gloeobacter violaceus (strain ATCC 29082 / PCC 7421)).